The chain runs to 255 residues: Vitamin B12 import ATP-binding protein BtuD (255 aa).

An ABC transporter domain is found at M2–Q240. G30–S37 contacts ATP.

Belongs to the ABC transporter superfamily. Vitamin B12 importer (TC 3.A.1.13.1) family. The complex is composed of two ATP-binding proteins (BtuD), two transmembrane proteins (BtuC) and a solute-binding protein (BtuF).

The protein localises to the cell inner membrane. The enzyme catalyses an R-cob(III)alamin(out) + ATP + H2O = an R-cob(III)alamin(in) + ADP + phosphate + H(+). Part of the ABC transporter complex BtuCDF involved in vitamin B12 import. Responsible for energy coupling to the transport system. The chain is Vitamin B12 import ATP-binding protein BtuD from Vibrio parahaemolyticus serotype O3:K6 (strain RIMD 2210633).